The primary structure comprises 488 residues: Glutamyl-tRNA(Gln) amidotransferase subunit A (488 aa).

Catalysis depends on charge relay system residues Lys77 and Ser152. The Acyl-ester intermediate role is filled by Ser176.

Belongs to the amidase family. GatA subfamily. Heterotrimer of A, B and C subunits.

It catalyses the reaction L-glutamyl-tRNA(Gln) + L-glutamine + ATP + H2O = L-glutaminyl-tRNA(Gln) + L-glutamate + ADP + phosphate + H(+). Its function is as follows. Allows the formation of correctly charged Gln-tRNA(Gln) through the transamidation of misacylated Glu-tRNA(Gln) in organisms which lack glutaminyl-tRNA synthetase. The reaction takes place in the presence of glutamine and ATP through an activated gamma-phospho-Glu-tRNA(Gln). This Streptococcus pneumoniae (strain JJA) protein is Glutamyl-tRNA(Gln) amidotransferase subunit A.